The following is a 197-amino-acid chain: Suppressor of RNA silencing p3 (197 aa).

This sequence belongs to the tenuiviruses p3 protein family. Homodimer.

Its subcellular location is the host cytoplasm. In terms of biological role, acts as a suppressor of RNA-mediated gene silencing, also known as post-transcriptional gene silencing (PTGS), presumably through the binding of dsRNA. The protein is Suppressor of RNA silencing p3 of Rottboellia (Sorghum).